The chain runs to 44 residues: Antibacterial protein 3 homolog (44 aa).

It belongs to the staphylococcal hemolytic protein family.

It is found in the secreted. Functionally, has hemolytic activity and also inhibits the growth of gonococci. In Staphylococcus haemolyticus (strain JCSC1435), this protein is Antibacterial protein 3 homolog.